The chain runs to 280 residues: Mitochondrial outer membrane protein porin 2 (280 aa).

Belongs to the eukaryotic mitochondrial porin (TC 1.B.8.1) family. In terms of tissue distribution, expressed in roots, stems, leaves, palea, lemma and pollen.

It is found in the mitochondrion outer membrane. In terms of biological role, forms a channel through the mitochondrial outer membrane that allows diffusion of small hydrophilic molecules. The channel adopts an open conformation at low or zero membrane potential and a closed conformation at potentials above 30-40 mV. The open state has a weak anion selectivity whereas the closed state is cation-selective. In Oryza sativa subsp. japonica (Rice), this protein is Mitochondrial outer membrane protein porin 2 (VDAC2).